Reading from the N-terminus, the 311-residue chain is Aspartate carbamoyltransferase catalytic subunit (311 aa).

Positions 55 and 56 each coordinate carbamoyl phosphate. K85 serves as a coordination point for L-aspartate. 3 residues coordinate carbamoyl phosphate: R106, H135, and Q138. 2 residues coordinate L-aspartate: R168 and R230. Carbamoyl phosphate contacts are provided by L268 and P269.

This sequence belongs to the aspartate/ornithine carbamoyltransferase superfamily. ATCase family. In terms of assembly, heterododecamer (2C3:3R2) of six catalytic PyrB chains organized as two trimers (C3), and six regulatory PyrI chains organized as three dimers (R2).

The catalysed reaction is carbamoyl phosphate + L-aspartate = N-carbamoyl-L-aspartate + phosphate + H(+). Its pathway is pyrimidine metabolism; UMP biosynthesis via de novo pathway; (S)-dihydroorotate from bicarbonate: step 2/3. Functionally, catalyzes the condensation of carbamoyl phosphate and aspartate to form carbamoyl aspartate and inorganic phosphate, the committed step in the de novo pyrimidine nucleotide biosynthesis pathway. The protein is Aspartate carbamoyltransferase catalytic subunit of Klebsiella pneumoniae (strain 342).